A 527-amino-acid chain; its full sequence is Estrogen receptor beta (527 aa).

The modulating stretch occupies residues 1–145 (MDVKNSPSSL…SPSSKRDAHF (145 aa)). Phosphoserine; by MAPK occurs at positions 84 and 102. 2 consecutive NR C4-type zinc fingers follow at residues 146 to 166 (CAVC…CEGC) and 182 to 206 (CPAT…LRKC). The nuclear receptor DNA-binding region spans 146–211 (CAVCSDYASG…RLRKCYEVGM (66 aa)). One can recognise an NR LBD domain in the interval 261–495 (SPEQLVLTLL…DLLLEMLNAH (235 aa)).

Belongs to the nuclear hormone receptor family. NR3 subfamily. As to quaternary structure, binds DNA as a homodimer. Can form a heterodimer with ESR1. Interacts with NCOA1, NCOA3, NCOA5 and NCOA6 coactivators, leading to a strong increase of transcription of target genes. Interacts with UBE1C and AKAP13. Interacts with DNTTIP2. Interacts with CCDC62 in the presence of estradiol/E2; this interaction seems to enhance the transcription of target genes. Interacts with DNAAF4. Interacts with PRMT2. Interacts with CCAR2 (via N-terminus) in a ligand-independent manner. Interacts with RBM39, in the presence of estradiol (E2). Interacts with STUB1/CHIP. Phosphorylation at Ser-84 and Ser-102 recruits NCOA1. In terms of tissue distribution, present in granulosa cells of antral follicles in various stages of follicular growth.

The protein resides in the nucleus. Functionally, nuclear hormone receptor. Binds estrogens with an affinity similar to that of ESR1ESR1/ER-alpha, and activates expression of reporter genes containing estrogen response elements (ERE) in an estrogen-dependent manner. The chain is Estrogen receptor beta (ESR2) from Bos taurus (Bovine).